Here is a 699-residue protein sequence, read N- to C-terminus: Lutropin-choriogonadotropic hormone receptor (699 aa).

Positions 1 to 26 (MKQRFSALQLLKLLLLLQPPLPRALR) are cleaved as a signal peptide. An LRRNT domain is found at 27 to 66 (EALCPEPCNCVPDGALRCPGPTAGLTRLSLAYLPVKVIPS). The Extracellular segment spans residues 27 to 363 (EALCPEPCNC…EDIMGYDFLR (337 aa)). LRR repeat units follow at residues 96 to 115 (NLLNLSEILIQNTKNLRYIE), 124 to 145 (RLKYLSICNTGIRKFPDVTKVF), and 149 to 171 (SNFILEICDNLHITTIPGNAFQG). Asn-99 carries an N-linked (GlcNAc...) asparagine glycan. Asn-174 and Asn-195 each carry an N-linked (GlcNAc...) asparagine glycan. LRR repeat units follow at residues 175–196 (ESVTLKLYGNGFEEVQSHAFNG), 198–220 (TLTSLELKENVHLEKMHNGAFRG), and 223–244 (GPKTLDISSTKLQALPSYGLES). Asn-291, Asn-299, and Asn-313 each carry an N-linked (GlcNAc...) asparagine glycan. Tyr-331 carries the post-translational modification Sulfotyrosine. Residues 364–385 (VLIWLINILAIMGNMTVLFVLL) form a helical membrane-spanning segment. The Cytoplasmic segment spans residues 386–395 (TSRYKLTVPR). Residues 396 to 416 (FLMCNLSFADFCMGLYLLLIA) traverse the membrane as a helical segment. Topologically, residues 417-439 (SVDSQTKGQYYNHAIDWQTGSGC) are extracellular. Cys-439 and Cys-514 are joined by a disulfide. The chain crosses the membrane as a helical span at residues 440–462 (STAGFFTVFASELSVYTLTVITL). Over 463-482 (ERWHTITYAIHLDQKLRLRH) the chain is Cytoplasmic. The helical transmembrane segment at 483-505 (AILIMLGGWLFSSLIAMLPLVGV) threads the bilayer. At 506–525 (SNYMKVSICFPMDVETTLSQ) the chain is on the extracellular side. The helical transmembrane segment at 526–549 (VYILTILILNVVAFFIICACYIKI) threads the bilayer. Residues 550 to 570 (YFAVRNPELMATNKDTKIAKK) are Cytoplasmic-facing. The chain crosses the membrane as a helical span at residues 571 to 594 (MAILIFTDFTCMAPISFFAISAAF). At 595–605 (KVPLITVTNSK) the chain is on the extracellular side. The chain crosses the membrane as a helical span at residues 606–627 (VLLVLFYPINSCANPFLYAIFT). Topologically, residues 628-699 (KTFQRDFFLL…LLDKTRYTEC (72 aa)) are cytoplasmic. S-palmitoyl cysteine attachment occurs at residues Cys-643 and Cys-644.

Belongs to the G-protein coupled receptor 1 family. FSH/LSH/TSH subfamily. In terms of processing, sulfated. Gonadal and thyroid cells.

It is found in the cell membrane. In terms of biological role, receptor for lutropin-choriogonadotropic hormone. The activity of this receptor is mediated by G proteins which activate adenylate cyclase. This chain is Lutropin-choriogonadotropic hormone receptor (LHCGR), found in Homo sapiens (Human).